The following is a 95-amino-acid chain: Co-chaperonin GroES (95 aa).

Belongs to the GroES chaperonin family. In terms of assembly, heptamer of 7 subunits arranged in a ring. Interacts with the chaperonin GroEL.

Its subcellular location is the cytoplasm. In terms of biological role, together with the chaperonin GroEL, plays an essential role in assisting protein folding. The GroEL-GroES system forms a nano-cage that allows encapsulation of the non-native substrate proteins and provides a physical environment optimized to promote and accelerate protein folding. GroES binds to the apical surface of the GroEL ring, thereby capping the opening of the GroEL channel. The sequence is that of Co-chaperonin GroES from Xylella fastidiosa (strain M12).